The primary structure comprises 513 residues: QWRF motif-containing protein 9 (513 aa).

Composition is skewed to polar residues over residues 1-26 (MTAA…PSES), 43-55 (GTSS…SPKR), and 65-78 (VTPS…PQST). Disordered stretches follow at residues 1–89 (MTAA…RREV), 115–144 (GTLE…LSDQ), and 184–293 (VSNR…LRVR). Positions 79–89 (PRRESLDRREV) are enriched in basic and acidic residues. Polar residues-rich tracts occupy residues 202-211 (ESVSSGSSNG) and 244-262 (VDSS…SPRG). Positions 334–337 (QWQF) match the QWRF motif motif.

Belongs to the QWRF family.

This Arabidopsis thaliana (Mouse-ear cress) protein is QWRF motif-containing protein 9 (QWRF9).